The sequence spans 515 residues: Recombining binding protein suppressor of hairless-like protein (515 aa).

Residues Met1–Trp40 are disordered. DNA-binding stretches follow at residues Gln76–Phe86, Ser191–Lys196, and Arg218–Thr223. One can recognise an IPT/TIG domain in the interval Pro384 to Thr474.

This sequence belongs to the Su(H) family. Interacts weakly with EBNA2. Does not interact with any Notch proteins. As to expression, highly expressed in lung. Also detected in spleen, and brain.

The protein resides in the nucleus. In terms of biological role, putative transcription factor, which cooperates with EBNA2 to activate transcription. This chain is Recombining binding protein suppressor of hairless-like protein (Rbpjl), found in Mus musculus (Mouse).